Reading from the N-terminus, the 458-residue chain is Probable ECA polymerase (458 aa).

A run of 11 helical transmembrane segments spans residues 3-23 (LAQF…VLTL), 37-57 (VFFS…TCLL), 65-85 (VVPV…YAIY), 112-132 (THLT…IFFL), 154-174 (GVAL…VYFL), 180-200 (AWFF…VIVG), 201-221 (GTRA…IVRG), 222-242 (WISL…MFWL), 340-360 (LVVM…GMII), 377-397 (YKAA…IVLA), and 409-429 (VFFC…YWLF).

It belongs to the WzyE family. As to quaternary structure, probably part of a complex composed of WzxE, WzyE and WzzE.

It is found in the cell inner membrane. Its pathway is bacterial outer membrane biogenesis; enterobacterial common antigen biosynthesis. Functionally, probably involved in the polymerization of enterobacterial common antigen (ECA) trisaccharide repeat units. The sequence is that of Probable ECA polymerase from Serratia proteamaculans (strain 568).